A 472-amino-acid polypeptide reads, in one-letter code: Inhibitor of Apoptosis OPG037 (472 aa).

6 ANK repeats span residues 97-126, 130-161, 233-263, 267-297, 322-351, and 353-377; these read DGNY…DPNA, HNKT…KINN, DGNT…DVNK, FGDS…VITD, YDST…ICED, and MYYA…SVDF.

This sequence belongs to the orthopoxvirus OPG037 protein family. May interact with host caspase-9-Apaf-1 complex.

Its subcellular location is the host cytoplasm. Inhibits host apoptosis. Acts by associating with host apoptosome. This is Inhibitor of Apoptosis OPG037 (OPG037) from Vaccinia virus (strain Western Reserve) (VACV).